The sequence spans 884 residues: MGRKTLCESETVCRDVTINGSAGCLQNVGPPPTNLFQPPRRPGLGTLGKPIRLLANHFQVQIPKIDVYHYDVDIKPEKRPRRVNREVVDTMVRHFKMPIFGDNQPGYDGKRNMYTAHPLPIGRDRVDLEVTLPGEGKDQTFKVTIQWVSVVSLQLLLEALSGHLSEVPDDSVQALDVITRHLPSMRYTPVGRSFFSPPEGYYHPLGGGREVWFGFHQSVRPAMWNMMLNIDVSATAFYRAQPVIEFMCEVLDVQNINEQTKPLTDSQRVKFTKEIRGLKVEVTHCGQMKRKYRVCNVTRRPASHQTFPLQLENGQAMECTVAQYFKQKYSLQLKYPHLPCLQVGQEQKHTYLPLEVCNIVAGQRCIKKLTDNQTSTMIKATARSAPDRQEEISRLVKSNSMVGGPDPYLKEFGIVVHNEMTELTGRVLPAPMLQYGGRNKTVATPNQGVWDMRGKQFYAGIEIKVWAVACFAPQKQCREDLLKSFTDQLRKISKDAGMPIQGQPCFCKYAQGADSVEPMFKHLKLTYVGLQLIVVILPGKTPVYAEVKRVGDTLLGMATQCVQVKNVVKTSPQTLSNLCLKINAKLGGINNVLVPHQRPSVFQQPVIFLGADVTHPPAGDGKKPSIAAVVGSMDGHPSRYCATVRVQTSRQETTQELLYSQEVIQDLCNMVRELLIQFYKSTRFKPTRIIYYRGGVSEGQMKQVAWPELMAIRKACISLEEDYRPGITYIVVQKRHHTRLFCSDKTERVGKSGNVPAGTTVDSTITHPSEFDFYLCSHAGIQGTSRPSHYQVLWDDNCFTADELQLLTYQLCHTYVRCTRSVSIPAPAYYARLVAFRARYHLVDKDHDSAEGSHVSGQSNGRDPQALAKAVQIHHDTQHSMYFA.

The region spanning 242–361 is the PAZ domain; that stretch reads PVIEFMCEVL…LPLEVCNIVA (120 aa). The region spanning 532–843 is the Piwi domain; that stretch reads LIVVILPGKT…VAFRARYHLV (312 aa). The disordered stretch occupies residues 848-870; the sequence is DSAEGSHVSGQSNGRDPQALAKA.

Belongs to the argonaute family. Ago subfamily.

Its subcellular location is the cytoplasm. It is found in the P-body. Its function is as follows. Required for RNA-mediated gene silencing (RNAi). Binds to short RNAs such as microRNAs (miRNAs) and represses the translation of mRNAs which are complementary to them. Lacks endonuclease activity and does not appear to cleave target mRNAs. This is Protein argonaute-4 (ago4) from Xenopus laevis (African clawed frog).